Here is a 107-residue protein sequence, read N- to C-terminus: Quaternary ammonium compound-resistance protein QacC (107 aa).

Residues 1–2 are Cytoplasmic-facing; it reads MP. The chain crosses the membrane as a helical span at residues 3-20; that stretch reads YIYLIIAISTEVIGSAFL. Over 21 to 29 the chain is Extracellular; it reads KSSEGFSKF. A helical membrane pass occupies residues 30–47; that stretch reads IPSLGTIISFGICFYFLS. Residues 48 to 56 are Cytoplasmic-facing; the sequence is KTMQHLPLN. A helical membrane pass occupies residues 57 to 75; sequence ITYATWAGLGLVLTTVVSI. The Extracellular segment spans residues 76–85; that stretch reads IIFKEQINLI. The chain crosses the membrane as a helical span at residues 86 to 103; the sequence is TIVSIVLIIVGVVSLNIF. Topologically, residues 104-107 are cytoplasmic; it reads GTSH.

The protein belongs to the drug/metabolite transporter (DMT) superfamily. Small multidrug resistance (SMR) (TC 2.A.7.1) family.

The protein localises to the cell membrane. Ethidium export is inhibited by N-ethylmaleimide (NEM). Its function is as follows. Multidrug exporter. Is implicated for the resistance to bacteriocidal quaternary ammonium compounds and ethidium bromide. The chain is Quaternary ammonium compound-resistance protein QacC from Staphylococcus aureus.